The following is a 116-amino-acid chain: NADH-ubiquinone oxidoreductase chain 3 (116 aa).

3 helical membrane-spanning segments follow: residues 3 to 23 (LVTT…TISF), 56 to 76 (FFLI…LLPL), and 84 to 104 (APTL…LGLI).

The protein belongs to the complex I subunit 3 family.

It is found in the mitochondrion membrane. The catalysed reaction is a ubiquinone + NADH + 5 H(+)(in) = a ubiquinol + NAD(+) + 4 H(+)(out). In terms of biological role, core subunit of the mitochondrial membrane respiratory chain NADH dehydrogenase (Complex I) that is believed to belong to the minimal assembly required for catalysis. Complex I functions in the transfer of electrons from NADH to the respiratory chain. The immediate electron acceptor for the enzyme is believed to be ubiquinone. The sequence is that of NADH-ubiquinone oxidoreductase chain 3 (MT-ND3) from Oncorhynchus nerka (Sockeye salmon).